The primary structure comprises 476 residues: Glycogen synthase (476 aa).

Residue Lys-15 participates in ADP-alpha-D-glucose binding.

This sequence belongs to the glycosyltransferase 1 family. Bacterial/plant glycogen synthase subfamily.

It carries out the reaction [(1-&gt;4)-alpha-D-glucosyl](n) + ADP-alpha-D-glucose = [(1-&gt;4)-alpha-D-glucosyl](n+1) + ADP + H(+). Its pathway is glycan biosynthesis; glycogen biosynthesis. Functionally, synthesizes alpha-1,4-glucan chains using ADP-glucose. This Haemophilus influenzae (strain PittEE) protein is Glycogen synthase.